The primary structure comprises 284 residues: 4-diphosphocytidyl-2-C-methyl-D-erythritol kinase (284 aa).

Residue Lys-14 is part of the active site. 98 to 108 (PMGGGIGGGSS) is an ATP binding site. Asp-140 is a catalytic residue.

The protein belongs to the GHMP kinase family. IspE subfamily.

The enzyme catalyses 4-CDP-2-C-methyl-D-erythritol + ATP = 4-CDP-2-C-methyl-D-erythritol 2-phosphate + ADP + H(+). The protein operates within isoprenoid biosynthesis; isopentenyl diphosphate biosynthesis via DXP pathway; isopentenyl diphosphate from 1-deoxy-D-xylulose 5-phosphate: step 3/6. Catalyzes the phosphorylation of the position 2 hydroxy group of 4-diphosphocytidyl-2C-methyl-D-erythritol. The polypeptide is 4-diphosphocytidyl-2-C-methyl-D-erythritol kinase (Shewanella loihica (strain ATCC BAA-1088 / PV-4)).